The chain runs to 78 residues: Large ribosomal subunit protein bL28 (78 aa).

It belongs to the bacterial ribosomal protein bL28 family.

The polypeptide is Large ribosomal subunit protein bL28 (Bordetella avium (strain 197N)).